Consider the following 707-residue polypeptide: Polyribonucleotide nucleotidyltransferase (707 aa).

Residues Asp-488 and Asp-494 each coordinate Mg(2+). Positions 555–614 constitute a KH domain; sequence PRLYVMKINPEKIRDVIGKGGAVIRALTEETGTQINIEEDGTITIASNDSAKADEAKRRI. One can recognise an S1 motif domain in the interval 624–692; sequence GKVYEGAITK…EKGRVKLSMK (69 aa).

The protein belongs to the polyribonucleotide nucleotidyltransferase family. The cofactor is Mg(2+).

It is found in the cytoplasm. It catalyses the reaction RNA(n+1) + phosphate = RNA(n) + a ribonucleoside 5'-diphosphate. Functionally, involved in mRNA degradation. Catalyzes the phosphorolysis of single-stranded polyribonucleotides processively in the 3'- to 5'-direction. The polypeptide is Polyribonucleotide nucleotidyltransferase (Polaromonas sp. (strain JS666 / ATCC BAA-500)).